Reading from the N-terminus, the 139-residue chain is MTERTLVLIKPDAVARGYVGEILGRIERKGLTISALELRTAPGDIAAAHYAEHEGRPFYPGLLEFITGGPLVAAVLEGPRAIAAFRQLAGGTDPVEKAVPGTIRGDFGLEAQENLVHGSDSVESAEREIALWFPQFAAN.

K10, F58, R86, T92, R104, and N114 together coordinate ATP. Catalysis depends on H117, which acts as the Pros-phosphohistidine intermediate.

The protein belongs to the NDK family. As to quaternary structure, homotetramer. Requires Mg(2+) as cofactor.

Its subcellular location is the cytoplasm. It catalyses the reaction a 2'-deoxyribonucleoside 5'-diphosphate + ATP = a 2'-deoxyribonucleoside 5'-triphosphate + ADP. The catalysed reaction is a ribonucleoside 5'-diphosphate + ATP = a ribonucleoside 5'-triphosphate + ADP. In terms of biological role, major role in the synthesis of nucleoside triphosphates other than ATP. The ATP gamma phosphate is transferred to the NDP beta phosphate via a ping-pong mechanism, using a phosphorylated active-site intermediate. The chain is Nucleoside diphosphate kinase from Rhodococcus opacus (strain B4).